Consider the following 67-residue polypeptide: Phycobilisome 7.8 kDa linker polypeptide, allophycocyanin-associated, core (67 aa).

The 56-residue stretch at 1-56 (MRMFRITACVPSQTRIRTQRELQNTYFTKLVPYDNSFREQQRIMKMGGKIVKVELA) folds into the CpcD-like domain.

The protein belongs to the phycobilisome linker protein family.

It is found in the cellular thylakoid membrane. Functionally, rod linker protein, associated with allophycocyanin. Linker polypeptides determine the state of aggregation and the location of the disk-shaped phycobiliprotein units within the phycobilisome and modulate their spectroscopic properties in order to mediate a directed and optimal energy transfer. The polypeptide is Phycobilisome 7.8 kDa linker polypeptide, allophycocyanin-associated, core (apcC) (Synechocystis sp. (strain ATCC 27184 / PCC 6803 / Kazusa)).